We begin with the raw amino-acid sequence, 78 residues long: Short neurotoxin SNTX26 (78 aa).

Positions 1-21 (MKTLLLTFLVVTIVCLDLGYT) are cleaved as a signal peptide. 4 cysteine pairs are disulfide-bonded: C24–C40, C33–C58, C62–C70, and C71–C76.

It belongs to the three-finger toxin family. Short-chain subfamily. Expressed by the venom gland.

Its subcellular location is the secreted. Its function is as follows. This three-finger toxin binds and inhibits the nicotinic acetylcholine receptor (nAChR). The sequence is that of Short neurotoxin SNTX26 from Ophiophagus hannah (King cobra).